A 163-amino-acid chain; its full sequence is NADH-quinone oxidoreductase subunit I (163 aa).

2 4Fe-4S ferredoxin-type domains span residues 54-84 (LRRYPNGEERCIACKLCEAVCPALAITIDSA) and 94-123 (TRYDIDLFKCIFCGFCEESCPVDSIVETHI). Cys64, Cys67, Cys70, Cys74, Cys103, Cys106, Cys109, and Cys113 together coordinate [4Fe-4S] cluster.

Belongs to the complex I 23 kDa subunit family. In terms of assembly, NDH-1 is composed of 14 different subunits. Subunits NuoA, H, J, K, L, M, N constitute the membrane sector of the complex. Requires [4Fe-4S] cluster as cofactor.

It is found in the cell inner membrane. It carries out the reaction a quinone + NADH + 5 H(+)(in) = a quinol + NAD(+) + 4 H(+)(out). In terms of biological role, NDH-1 shuttles electrons from NADH, via FMN and iron-sulfur (Fe-S) centers, to quinones in the respiratory chain. The immediate electron acceptor for the enzyme in this species is believed to be ubiquinone. Couples the redox reaction to proton translocation (for every two electrons transferred, four hydrogen ions are translocated across the cytoplasmic membrane), and thus conserves the redox energy in a proton gradient. The sequence is that of NADH-quinone oxidoreductase subunit I from Xanthomonas campestris pv. campestris (strain 8004).